The following is a 336-amino-acid chain: Flavonoid 4'-O-methyltransferase 5 (336 aa).

Positions 140 and 203 each coordinate S-adenosyl-L-methionine. The Proton acceptor role is filled by His241.

Belongs to the class I-like SAM-binding methyltransferase superfamily. Cation-independent O-methyltransferase family. As to quaternary structure, homodimer. In terms of tissue distribution, expressed in leaves.

The enzyme catalyses genkwanin + S-adenosyl-L-methionine = apigenin 4',7-dimethyl ether + S-adenosyl-L-homocysteine. It catalyses the reaction cirsiliol + S-adenosyl-L-methionine = eupatorin + S-adenosyl-L-homocysteine + H(+). The catalysed reaction is cirsimaritin + S-adenosyl-L-methionine = salvigenin + S-adenosyl-L-homocysteine + H(+). It carries out the reaction scutellarein 7-methyl ether + S-adenosyl-L-methionine = ladanein + S-adenosyl-L-homocysteine + H(+). The enzyme catalyses (2S)-sakuranetin + S-adenosyl-L-methionine = (2S)-naringenin 4',7-dimethyl ether + S-adenosyl-L-homocysteine + H(+). It participates in flavonoid metabolism. Its activity is regulated as follows. Substrate inhibition by genkwanin (GENK) at concentrations above 10 mM. Flavonoid 4'-O-methyltransferase involved in the biosynthesis of polymethoxylated flavonoids natural products such as nevadensin and salvigenin, aroma compounds which contribute to the flavor of sweet basil, and exhibit pharmacological activities such as anti-allergic, anti-oxidant, antibacterial, anti-proliferative, and anti-inflammatory effects. Catalyzes S-adenosylmethionine-dependent regioselective 4'-O-methylation of flavonoids; active on various hydroxylated flavonoid substrates, including scutellarein-7-methyl ether (SCU7Me) and, with a lower efficiency, cirsimaritin (CIRM), sakuranetin (NAR7Me), ladanein (LAD) and genkwanin (GENK). The chain is Flavonoid 4'-O-methyltransferase 5 from Ocimum basilicum (Sweet basil).